Reading from the N-terminus, the 148-residue chain is VVYKARDRVTNETIALKKIRLEQEDEGVPSTAIREISLLKEMQHRNIVRLQDVVHSEKRLYLVFEYLDLDLKKHMDSSPEFVKDPRQVKMFLYQMLCGIAYCHSHRVLHRDLKPQNLLIDRRTNCVKLADFGLARAFGIPVRTFTHEV.

ATP-binding positions include 1–2 (VV) and lysine 17. The region spanning 1-148 (VVYKARDRVT…IPVRTFTHEV (148 aa)) is the Protein kinase domain. Aspartate 111 (proton acceptor) is an active-site residue. Threonine 145 bears the Phosphothreonine; by CAK mark.

This sequence belongs to the protein kinase superfamily. CMGC Ser/Thr protein kinase family. CDC2/CDKX subfamily.

The enzyme catalyses L-seryl-[protein] + ATP = O-phospho-L-seryl-[protein] + ADP + H(+). The catalysed reaction is L-threonyl-[protein] + ATP = O-phospho-L-threonyl-[protein] + ADP + H(+). It catalyses the reaction [DNA-directed RNA polymerase] + ATP = phospho-[DNA-directed RNA polymerase] + ADP + H(+). Its activity is regulated as follows. Phosphorylation inactivates the enzyme; while. Thr-145 phosphorylation is required for the catalytic activity of the enzyme. Functionally, plays a key role in the control of the eukaryotic cell cycle. It is required in higher cells for entry into S-phase and mitosis. Component of the kinase complex that phosphorylates the repetitive C-terminus of RNA polymerase II. The polypeptide is Cell division control protein 2 homolog 1 (CDC2) (Pisum sativum (Garden pea)).